The primary structure comprises 924 residues: Periplasmic nitrate reductase (924 aa).

The tat-type signal signal peptide spans 1–29 (MNRRDFIKNTAIASACGVAGLSVPSSVLA). A 4Fe-4S Mo/W bis-MGD-type domain is found at 35-91 (WRWDKAVCRFCGTGCGILVARQDGKIVAVKGDPAAPVNRGLNCIKGYFNAKIMYGED). [4Fe-4S] cluster contacts are provided by C42, C45, C49, and C77. Mo-bis(molybdopterin guanine dinucleotide) contacts are provided by residues K79, Q147, N172, C176, 209–216 (WGANMAEM), M417, Q421, N527, 552–553 (SD), K575, D602, and 814–823 (TGRVLEHWHS). Substrate is bound at residue W890. Mo-bis(molybdopterin guanine dinucleotide) contacts are provided by N898 and K915.

It belongs to the prokaryotic molybdopterin-containing oxidoreductase family. NasA/NapA/NarB subfamily. Component of the periplasmic nitrate reductase NapAB complex composed of NapA and NapB. Requires [4Fe-4S] cluster as cofactor. Mo-bis(molybdopterin guanine dinucleotide) serves as cofactor. In terms of processing, predicted to be exported by the Tat system. The position of the signal peptide cleavage has not been experimentally proven.

The protein resides in the periplasm. The catalysed reaction is 2 Fe(II)-[cytochrome] + nitrate + 2 H(+) = 2 Fe(III)-[cytochrome] + nitrite + H2O. Functionally, catalytic subunit of the periplasmic nitrate reductase complex NapAB. Receives electrons from NapB and catalyzes the reduction of nitrate to nitrite. In Campylobacter lari (strain RM2100 / D67 / ATCC BAA-1060), this protein is Periplasmic nitrate reductase.